The following is a 178-amino-acid chain: SCAN domain-containing protein 1 (178 aa).

The tract at residues 1 to 107 is disordered; the sequence is MAATEQSLAP…GSRPGPETFR (107 aa). Positions 9–18 are enriched in low complexity; the sequence is APAGSSAPPS. The span at 36–54 shows a compositional bias: polar residues; it reads GSSSTPEAPSIPDSSNPSA. An SCAN box domain is found at 107–178; sequence RQRFRQFRYQ…RRRTDVRITG (72 aa).

Interacts with ZNF202.

Its subcellular location is the nucleus. Functionally, may regulate transcriptional activity. The polypeptide is SCAN domain-containing protein 1 (SCAND1) (Bos taurus (Bovine)).